The primary structure comprises 541 residues: Putative transferase YhbX (541 aa).

Over 1–60 (MTVFNKFARTFKSHWLLYLCVIVFGITNLVASSGAHMVQRLLFFVLTILVVKRISSLPLR) the chain is Periplasmic. A helical membrane pass occupies residues 61–81 (LLVAAPFVLLTAADMSISLYS). The Cytoplasmic segment spans residues 82-110 (WCTFGTTFNDGFAISVLQSDPDEVVKMLG). A helical membrane pass occupies residues 111 to 131 (MYIPYLCAFAFLSLLFLAVII). Residues 132 to 141 (KYDVSLPTKK) lie on the Periplasmic side of the membrane. Residues 142–162 (VTGILLLIVISGSLFSACQFA) traverse the membrane as a helical segment. Topologically, residues 163–264 (YKDAKNKKAF…RKQIKLFNQA (102 aa)) are cytoplasmic. The chain crosses the membrane as a helical span at residues 265–285 (ISGAPYTALSVPLSLTADSVL). The Periplasmic portion of the chain corresponds to 286–541 (SHDIHNYPDN…QGNPTPEGQG (256 aa)).

It belongs to the phosphoethanolamine transferase family.

It localises to the cell inner membrane. Its function is as follows. Probably does not transfer phosphoethanolamine to lipid A. This chain is Putative transferase YhbX (yhbX), found in Escherichia coli (strain K12).